The following is a 587-amino-acid chain: Vesicular glutamate transporter 2.2 (587 aa).

At Met-1–Tyr-71 the chain is on the cytoplasmic side. Residues Ile-72–Gly-92 form a helical membrane-spanning segment. At Val-93–Val-125 the chain is on the vesicular side. N-linked (GlcNAc...) asparagine glycosylation is found at Asn-100 and Asn-101. Residues Gly-126–Ile-146 form a helical membrane-spanning segment. The Cytoplasmic segment spans residues Ser-147–Arg-149. The helical transmembrane segment at Leu-150–Ile-170 threads the bilayer. Topologically, residues Pro-171–Cys-180 are vesicular. A helical transmembrane segment spans residues Val-181–Trp-203. The Cytoplasmic segment spans residues Ser-204–Thr-217. A helical membrane pass occupies residues Thr-218–Val-238. Over Gln-239–Ser-245 the chain is Vesicular. The chain crosses the membrane as a helical span at residues Val-246–Tyr-266. Residues Glu-267 to Met-311 lie on the Cytoplasmic side of the membrane. Residues Pro-312–Ile-332 traverse the membrane as a helical segment. At Ser-333–Gly-350 the chain is on the vesicular side. Residues Met-351–Ala-371 form a helical membrane-spanning segment. The Cytoplasmic segment spans residues Asp-372–Lys-387. Residues Ile-388–His-408 traverse the membrane as a helical segment. The Vesicular portion of the chain corresponds to Ser-409 to Lys-410. Residues Gly-411 to Phe-431 traverse the membrane as a helical segment. Topologically, residues Asn-432 to Ser-444 are cytoplasmic. Residues Ile-445 to Val-465 traverse the membrane as a helical segment. The Vesicular portion of the chain corresponds to Gly-466 to Asn-479. Asn-471 is a glycosylation site (N-linked (GlcNAc...) asparagine). The helical transmembrane segment at Val-480–Ser-500 threads the bilayer. Residues Gly-501–Ser-587 lie on the Cytoplasmic side of the membrane.

Belongs to the major facilitator superfamily. Sodium/anion cotransporter family. VGLUT subfamily. In terms of tissue distribution, expressed in spinal cord.

It is found in the cytoplasmic vesicle. The protein resides in the secretory vesicle. Its subcellular location is the synaptic vesicle membrane. It localises to the membrane. The protein localises to the synapse. It is found in the synaptosome. The protein resides in the cell membrane. The catalysed reaction is L-glutamate(out) = L-glutamate(in). It carries out the reaction 3 Na(+)(out) + phosphate(out) = 3 Na(+)(in) + phosphate(in). It catalyses the reaction phosphate(in) = phosphate(out). The enzyme catalyses K(+)(in) + H(+)(out) = K(+)(out) + H(+)(in). The catalysed reaction is chloride(in) = chloride(out). Chloride channel activity is allosterically activated by lumenal H(+) and Cl(-) leading to synaptic vesicles acidification. The L-glutamate transport activity is allosterically activated by lumenal H(+) and Cl(-). The allosteric requirement for H(+) efficiently prevents non-vesicular efflux across the plasma membrane. The L-glutamate uniporter activity exhibits a biphasic dependence on chloride concentration. Functionally, multifunctional transporter that transports L-glutamate as well as multiple ions such as chloride, proton, potassium, sodium and phosphate. At the synaptic vesicle membrane, mainly functions as a uniporter which transports preferentially L-glutamate but also, phosphate from the cytoplasm into synaptic vesicles at presynaptic nerve terminals of excitatory neural cells. The L-glutamate or phosphate uniporter activity is electrogenic and is driven by the proton electrochemical gradient, mainly by the electrical gradient established by the vacuolar H(+)-ATPase across the synaptic vesicle membrane. In addition, functions as a chloride channel that allows a chloride permeation through the synaptic vesicle membrane therefore affects the proton electrochemical gradient and promotes synaptic vesicles acidification. Moreover, functions as a vesicular K(+)/H(+) antiport allowing to maintain the electrical gradient and to decrease chemical gradient and therefore sustain vesicular L-glutamate uptake. The vesicular H(+)/H(+) antiport activity is electroneutral. At the plasma membrane, following exocytosis, functions as a symporter of Na(+) and phosphate from the extracellular space to the cytoplasm allowing synaptic phosphate homeostasis regulation. The symporter activity is driven by an inside negative membrane potential and is electrogenic. Also involved in the regulation of retinal hyaloid vessel regression during postnatal development. May also play a role in the endocrine L-glutamatergic system of other tissues such as pineal gland and pancreas. In Danio rerio (Zebrafish), this protein is Vesicular glutamate transporter 2.2 (slc17a6a).